Consider the following 533-residue polypeptide: GMP synthase [glutamine-hydrolyzing] (533 aa).

The region spanning 12–206 is the Glutamine amidotransferase type-1 domain; that stretch reads TILVLDFGSQ…AVGICGAEQK (195 aa). The Nucleophile role is filled by Cys88. Residues His180 and Glu182 contribute to the active site. The region spanning 207–408 is the GMPS ATP-PPase domain; the sequence is WTMAEFIGQE…LGISPELVGR (202 aa). An ATP-binding site is contributed by 235-241; it reads SGGVDST. Residues Arg308, Asp470, Lys525, and Glu531 each coordinate XMP.

Homodimer. Mg(2+) is required as a cofactor.

It is found in the cytoplasm. It localises to the cytosol. It carries out the reaction XMP + L-glutamine + ATP + H2O = GMP + L-glutamate + AMP + diphosphate + 2 H(+). The protein operates within purine metabolism; GMP biosynthesis; GMP from XMP (L-Gln route): step 1/1. Its function is as follows. Catalyzes the conversion of xanthine monophosphate (XMP) to GMP in the presence of glutamine and ATP through an adenyl-XMP intermediate. The sequence is that of GMP synthase [glutamine-hydrolyzing] (gua1) from Emericella nidulans (strain FGSC A4 / ATCC 38163 / CBS 112.46 / NRRL 194 / M139) (Aspergillus nidulans).